The following is an 802-amino-acid chain: LPS-assembly protein LptD (802 aa).

The signal sequence occupies residues 1-29; sequence MARLFSLKPLVLALGFCFGTHCAAADAVA.

This sequence belongs to the LptD family. In terms of assembly, component of the lipopolysaccharide transport and assembly complex. Interacts with LptE and LptA.

The protein resides in the cell outer membrane. Its function is as follows. Together with LptE, is involved in the assembly of lipopolysaccharide (LPS) at the surface of the outer membrane. This chain is LPS-assembly protein LptD, found in Neisseria meningitidis serogroup A / serotype 4A (strain DSM 15465 / Z2491).